The sequence spans 1506 residues: Gag-Pol polyprotein (1506 aa).

2 consecutive CCHC-type zinc fingers follow at residues 385-402 (QKCY…QCRQ) and 404-421 (IICH…DCRQ). In terms of domain architecture, Peptidase A2 spans 459–530 (KKLLVDTGAD…SPVEVLGRDN (72 aa)). Aspartate 464 acts as the Protease; shared with dimeric partner in catalysis. The 190-residue stretch at 587–776 (EGKVGRAPPH…YPAKWLGFEL (190 aa)) folds into the Reverse transcriptase domain. 7 residues coordinate Mg(2+): aspartate 652, aspartate 727, aspartate 728, aspartate 980, glutamate 1012, aspartate 1032, and aspartate 1085. An RNase H type-1 domain is found at 971–1093 (VVPGPTYYTD…IDRYISEIFL (123 aa)). The Integrase-type zinc finger occupies 1228 to 1269 (ENIPLAEEEHNKWHQDAVSLHLEFGIPRTAAEDIVQQCDVCQ). Zn(2+) contacts are provided by histidine 1237, histidine 1241, cysteine 1265, and cysteine 1268. Residues 1270 to 1430 (ENKMPSTLRG…SPMDIFIFNK (161 aa)) form the Integrase catalytic domain. Residues aspartate 1291, aspartate 1343, and glutamate 1379 each coordinate Mg(2+). Residues 1447-1499 (RFCYYRTRKRGHPGEWQGPTQVLWGGDGAIVVKDRGTDRYLVIANKDVKFIPP) constitute a DNA-binding region (integrase-type).

The protein belongs to the retroviral Pol polyprotein family. In terms of assembly, homotetramer; further associates as a homohexadecamer. Mg(2+) is required as a cofactor. In terms of processing, specific enzymatic cleavages by the viral protease yield mature proteins.

The protein localises to the virion. The catalysed reaction is 3'-end directed exonucleolytic cleavage of viral RNA-DNA hybrid.. It catalyses the reaction Endonucleolytic cleavage to 5'-phosphomonoester.. It carries out the reaction dUTP + H2O = dUMP + diphosphate + H(+). The enzyme catalyses DNA(n) + a 2'-deoxyribonucleoside 5'-triphosphate = DNA(n+1) + diphosphate. Mediates, with Gag polyprotein, the essential events in virion assembly, including binding the plasma membrane, making the protein-protein interactions necessary to create spherical particles, recruiting the viral Env proteins, and packaging the genomic RNA via direct interactions with the RNA packaging sequence. Functionally, targets the polyprotein to the plasma membrane. In terms of biological role, forms the core that encapsulates the genomic RNA-nucleocapsid complex in the virion. Its function is as follows. Encapsulates and protects viral dimeric unspliced genomic RNA (gRNA). Binds these RNAs through its zinc fingers. Acts as a nucleic acid chaperone which is involved in rearrangement of nucleic acid secondary structure during gRNA retrotranscription. Also facilitates template switch leading to recombination. The aspartyl protease mediates proteolytic cleavages of Gag and Gag-Pol polyproteins during or shortly after the release of the virion from the plasma membrane. Cleavages take place as an ordered, step-wise cascade to yield mature proteins. This process is called maturation. Displays maximal activity during the budding process just prior to particle release from the cell. Functionally, RT is a multifunctional enzyme that converts the viral dimeric RNA genome into dsDNA in the cytoplasm, shortly after virus entry into the cell. This enzyme displays a DNA polymerase activity that can copy either DNA or RNA templates, and a ribonuclease H (RNase H) activity that cleaves the RNA strand of RNA-DNA heteroduplexes in a partially processive 3' to 5' endonucleasic mode. Conversion of viral genomic RNA into dsDNA requires many steps. A tRNA binds to the primer-binding site (PBS) situated at the 5' end of the viral RNA. RT uses the 3' end of the tRNA primer to perfom a short round of RNA-dependent minus-strand DNA synthesis. The reading proceeds through the U5 region and ends after the repeated (R) region which is present at both ends of viral RNA. The portion of the RNA-DNA heteroduplex is digested by the RNase H, resulting in a ssDNA product attached to the tRNA primer. This ssDNA/tRNA hybridizes with the identical R region situated at the 3' end of viral RNA. This template exchange, known as minus-strand DNA strong stop transfer, can be either intra- or intermolecular. RT uses the 3' end of this newly synthesized short ssDNA to perfom the RNA-dependent minus-strand DNA synthesis of the whole template. RNase H digests the RNA template except for a polypurine tract (PPT) situated at the 5' end of the genome. It is not clear if both polymerase and RNase H activities are simultaneous. RNase H probably can proceed both in a polymerase-dependent (RNA cut into small fragments by the same RT performing DNA synthesis) and a polymerase-independent mode (cleavage of remaining RNA fragments by free RTs). Secondly, RT performs DNA-directed plus-strand DNA synthesis using the PPT that has not been removed by RNase H as primers. PPT and tRNA primers are then removed by RNase H. The 3' and 5' ssDNA PBS regions hybridize to form a circular dsDNA intermediate. Strand displacement synthesis by RT to the PBS and PPT ends produces a blunt ended, linear dsDNA copy of the viral genome that includes long terminal repeats (LTRs) at both ends. In terms of biological role, catalyzes viral DNA integration into the host chromosome, by performing a series of DNA cutting and joining reactions. This Maedi visna virus (strain KV1772) (MVV) protein is Gag-Pol polyprotein (pol).